The following is a 435-amino-acid chain: Enolase (435 aa).

Glutamine 163 is a binding site for (2R)-2-phosphoglycerate. Glutamate 205 functions as the Proton donor in the catalytic mechanism. Positions 243, 292, and 319 each coordinate Mg(2+). Residues lysine 344, arginine 373, serine 374, and lysine 395 each contribute to the (2R)-2-phosphoglycerate site. Lysine 344 serves as the catalytic Proton acceptor.

Belongs to the enolase family. Homooctamer, a tetramer of homodimers. The cofactor is Mg(2+).

The protein localises to the cytoplasm. The protein resides in the secreted. It localises to the cell surface. Its subcellular location is the cell wall. It carries out the reaction (2R)-2-phosphoglycerate = phosphoenolpyruvate + H2O. It functions in the pathway carbohydrate degradation; glycolysis; pyruvate from D-glyceraldehyde 3-phosphate: step 4/5. Catalyzes the reversible conversion of 2-phosphoglycerate (2-PG) into phosphoenolpyruvate (PEP). It is essential for the degradation of carbohydrates via glycolysis. In terms of biological role, 'Moonlights' as a plasminogen receptor. Binds plasminogen and more weakly plasmin when expressed on the bacterial cell surface; probably has more than one plasmin(ogen) binding site, may bind via Lys residues. Plasminogen binding potentially allows the bacterium to acquire surface-associated proteolytic activity, which in turn contributes to tissue invasion and virulence. This is Enolase from Streptococcus pyogenes serotype M6 (strain ATCC BAA-946 / MGAS10394).